Consider the following 1808-residue polypeptide: Tenascin (1808 aa).

The N-terminal stretch at 1-22 (MGLPSQVLACAILGLLYQHASG) is a signal peptide. A propeptide spanning residues 23 to 33 (GLIKRIIRQKR) is cleaved from the precursor. Asparagine 38 carries N-linked (GlcNAc...) asparagine glycosylation. A glycan (O-linked (Xyl...) (chondroitin sulfate) serine) is linked at serine 72. Residues 118 to 142 (DIKDLLSRLEELEGLVSSLREQCAS) adopt a coiled-coil conformation. Residues asparagine 168 and asparagine 186 are each glycosylated (N-linked (GlcNAc...) asparagine). The EGF-like 1; incomplete domain maps to 176–188 (CVCEPGWKGPNCS). EGF-like domains are found at residues 188-219 (SEPA…EDCS), 219-250 (SQAA…PDCG), 250-281 (GEEL…EDCN), 281-312 (NEPL…EDCG), 312-343 (GELI…EDCG), 343-374 (GELT…DDCS), 374-405 (SQKR…EDCG), 405-436 (GELR…EDCG), 436-467 (GELR…EDCG), 467-498 (GELR…EDCG), 498-529 (GELR…EDCG), 529-560 (GELS…EDCR), and 560-591 (RERS…IDCS). 39 disulfide bridges follow: cysteine 192–cysteine 202, cysteine 196–cysteine 207, cysteine 209–cysteine 218, cysteine 223–cysteine 233, cysteine 227–cysteine 238, cysteine 240–cysteine 249, cysteine 254–cysteine 264, cysteine 258–cysteine 269, cysteine 271–cysteine 280, cysteine 285–cysteine 295, cysteine 289–cysteine 300, cysteine 302–cysteine 311, cysteine 316–cysteine 326, cysteine 320–cysteine 331, cysteine 333–cysteine 342, cysteine 347–cysteine 357, cysteine 351–cysteine 362, cysteine 364–cysteine 373, cysteine 378–cysteine 388, cysteine 382–cysteine 393, cysteine 395–cysteine 404, cysteine 409–cysteine 419, cysteine 413–cysteine 424, cysteine 426–cysteine 435, cysteine 440–cysteine 450, cysteine 444–cysteine 455, cysteine 457–cysteine 466, cysteine 471–cysteine 481, cysteine 475–cysteine 486, cysteine 488–cysteine 497, cysteine 502–cysteine 512, cysteine 506–cysteine 517, cysteine 519–cysteine 528, cysteine 533–cysteine 543, cysteine 537–cysteine 548, cysteine 550–cysteine 559, cysteine 564–cysteine 574, cysteine 568–cysteine 579, and cysteine 581–cysteine 590. The N-linked (GlcNAc...) asparagine glycan is linked to asparagine 328. Fibronectin type-III domains lie at 595–685 (PPTE…LPAP), 686–775 (EGLK…TKLD), 776–866 (APSQ…DLDA), 867–957 (PRNL…TDLD), 958–1046 (NPKD…EEEP), 1047–1138 (ELGN…AHPE), 1139–1228 (VGEL…EAEP), 1229–1318 (EVDN…TVVG), 1319–1408 (SPKG…ALDS), 1409–1495 (PSGL…TGLD), and 1496–1584 (APKD…TGLL). 4 N-linked (GlcNAc...) asparagine glycosylation sites follow: asparagine 603, asparagine 643, asparagine 751, and asparagine 759. N-linked (GlcNAc...) asparagine glycosylation is found at asparagine 1050, asparagine 1090, asparagine 1101, asparagine 1112, asparagine 1153, and asparagine 1183. N-linked (GlcNAc...) asparagine glycosylation occurs at asparagine 1416. Residues 1582 to 1797 (GLLYPYPKDC…FAEMKLRPSS (216 aa)) enclose the Fibrinogen C-terminal domain. N-linked (GlcNAc...) asparagine glycosylation is found at asparagine 1736 and asparagine 1769.

This sequence belongs to the tenascin family. In terms of assembly, homohexamer; disulfide-linked. A homotrimer may be formed in the triple coiled-coil region and may be stabilized by disulfide rings at both ends. Two of such half-hexabrachions may be disulfide linked within the central globule. Interacts with CSPG5. In terms of tissue distribution, expressed in the brain.

Its subcellular location is the secreted. The protein localises to the extracellular space. It is found in the extracellular matrix. Its function is as follows. Extracellular matrix protein implicated in guidance of migrating neurons as well as axons during development, synaptic plasticity as well as neuronal regeneration. Ligand for integrins alpha-8/beta-1, alpha-9/beta-1, alpha-V/beta-3 and alpha-V/beta-6. The chain is Tenascin (TNC) from Gallus gallus (Chicken).